The sequence spans 392 residues: 1-deoxy-D-xylulose 5-phosphate reductoisomerase (392 aa).

NADPH is bound by residues Thr-10, Gly-11, Ser-12, Ile-13, and Asn-124. Lys-125 lines the 1-deoxy-D-xylulose 5-phosphate pocket. Residue Glu-126 coordinates NADPH. Asp-150 contacts Mn(2+). Residues Ser-151, Glu-152, Ser-180, and His-203 each contribute to the 1-deoxy-D-xylulose 5-phosphate site. Mn(2+) is bound at residue Glu-152. Residue Gly-209 participates in NADPH binding. The 1-deoxy-D-xylulose 5-phosphate site is built by Ser-216, Asn-221, Lys-222, and Glu-225. Glu-225 contacts Mn(2+).

Belongs to the DXR family. Mg(2+) serves as cofactor. Mn(2+) is required as a cofactor.

The catalysed reaction is 2-C-methyl-D-erythritol 4-phosphate + NADP(+) = 1-deoxy-D-xylulose 5-phosphate + NADPH + H(+). Its pathway is isoprenoid biosynthesis; isopentenyl diphosphate biosynthesis via DXP pathway; isopentenyl diphosphate from 1-deoxy-D-xylulose 5-phosphate: step 1/6. In terms of biological role, catalyzes the NADPH-dependent rearrangement and reduction of 1-deoxy-D-xylulose-5-phosphate (DXP) to 2-C-methyl-D-erythritol 4-phosphate (MEP). This chain is 1-deoxy-D-xylulose 5-phosphate reductoisomerase, found in Saccharophagus degradans (strain 2-40 / ATCC 43961 / DSM 17024).